Consider the following 98-residue polypeptide: Cell cycle protein GpsB (98 aa).

Residues Leu34–Met71 adopt a coiled-coil conformation.

It belongs to the GpsB family. Forms polymers through the coiled coil domains. Interacts with PBP1, MreC and EzrA.

The protein resides in the cytoplasm. Its function is as follows. Divisome component that associates with the complex late in its assembly, after the Z-ring is formed, and is dependent on DivIC and PBP2B for its recruitment to the divisome. Together with EzrA, is a key component of the system that regulates PBP1 localization during cell cycle progression. Its main role could be the removal of PBP1 from the cell pole after pole maturation is completed. Also contributes to the recruitment of PBP1 to the division complex. Not essential for septum formation. The polypeptide is Cell cycle protein GpsB (Geobacillus kaustophilus (strain HTA426)).